We begin with the raw amino-acid sequence, 669 residues long: DNA ligase (669 aa).

NAD(+) is bound by residues 35-39, 84-85, and E114; these read DSEYD and SL. Catalysis depends on K116, which acts as the N6-AMP-lysine intermediate. NAD(+)-binding residues include R137, E171, K287, and K311. The Zn(2+) site is built by C405, C408, C423, and C428. A BRCT domain is found at 591–669; that stretch reads DSDSYFAGKT…EAQLLGELKK (79 aa).

Belongs to the NAD-dependent DNA ligase family. LigA subfamily. Requires Mg(2+) as cofactor. The cofactor is Mn(2+).

It carries out the reaction NAD(+) + (deoxyribonucleotide)n-3'-hydroxyl + 5'-phospho-(deoxyribonucleotide)m = (deoxyribonucleotide)n+m + AMP + beta-nicotinamide D-nucleotide.. Its function is as follows. DNA ligase that catalyzes the formation of phosphodiester linkages between 5'-phosphoryl and 3'-hydroxyl groups in double-stranded DNA using NAD as a coenzyme and as the energy source for the reaction. It is essential for DNA replication and repair of damaged DNA. The protein is DNA ligase of Bacillus velezensis (strain DSM 23117 / BGSC 10A6 / LMG 26770 / FZB42) (Bacillus amyloliquefaciens subsp. plantarum).